Here is a 909-residue protein sequence, read N- to C-terminus: Lon protease homolog 2, peroxisomal (909 aa).

Residues 1–230 (MAPVRAPTAR…KVIELLDRQV (230 aa)) enclose the Lon N-terminal domain. The disordered stretch occupies residues 249 to 269 (FPMDPDSTKPGKVKPPVKAPG). 463-470 (GPPGVGKT) serves as a coordination point for ATP. In terms of domain architecture, Lon proteolytic spans 706–893 (TSRPGIVTGL…WEAIRYVWPD (188 aa)). Active-site residues include serine 799 and lysine 842. The short motif at 907 to 909 (SRL) is the Microbody targeting signal element.

The protein belongs to the peptidase S16 family.

The protein localises to the peroxisome matrix. The protein resides in the cytoplasm. It carries out the reaction Hydrolysis of proteins in presence of ATP.. Functionally, ATP-dependent serine protease that mediates the selective degradation of misfolded and unassembled polypeptides in the peroxisomal matrix. Necessary for type 2 peroxisome targeting signal (PTS2)-containing protein processing and facilitates peroxisome matrix protein import. The polypeptide is Lon protease homolog 2, peroxisomal (Sordaria macrospora (strain ATCC MYA-333 / DSM 997 / K(L3346) / K-hell)).